The following is a 397-amino-acid chain: MTAAIYLVKGREKSVKRKHPWIFSRGIGKVEGEPALGETVDVFTHDGKWLAKAAYSPESQIRARIWSFEKEEINKAFFVKRFQNAQLLREDVIERDGLTGYRLIAAESDGLPGVTIDRYQNFFVCQLLSAGAEYNKQAIVDALVECFPDCNVYERSDVAVRKKEGLKETTGVLHGEEPPKSVVIEENGVKISVDIVGGHKTGFYLDQRDSRQQAMKYVKDKEVLNCFSYTGGFGLYALKGGAKRVINADVSQPALDTAKYNAELNEFDISKKRAVFLNADVFKLLREYRDQGTQFDVVIMDPPKFAESKAQLNGACRGYKDINMLALQILKPGGTLLTYSCSGLMDQVLFQKIIADAAVDANRQVKFVERFEQAADHPTDTAYPEGFYLKGFACKVL.

The 78-residue stretch at 2–79 folds into the PUA domain; sequence TAAIYLVKGR…KEEINKAFFV (78 aa).

Belongs to the methyltransferase superfamily. RlmI family.

Its subcellular location is the cytoplasm. It carries out the reaction cytidine(1962) in 23S rRNA + S-adenosyl-L-methionine = 5-methylcytidine(1962) in 23S rRNA + S-adenosyl-L-homocysteine + H(+). Its function is as follows. Specifically methylates the cytosine at position 1962 (m5C1962) of 23S rRNA. The polypeptide is Ribosomal RNA large subunit methyltransferase I (Vibrio parahaemolyticus serotype O3:K6 (strain RIMD 2210633)).